The chain runs to 112 residues: UPF0102 protein Cla_1413 (112 aa).

The protein belongs to the UPF0102 family.

The sequence is that of UPF0102 protein Cla_1413 from Campylobacter lari (strain RM2100 / D67 / ATCC BAA-1060).